We begin with the raw amino-acid sequence, 136 residues long: Interleukin-13 (136 aa).

A signal peptide spans 1 to 18 (MALWLTVVIAFTCIGGLA). 6 N-linked (GlcNAc...) asparagine glycosylation sites follow: Asn38, Asn49, Asn57, Asn72, Asn75, and Asn131. Intrachain disulfides connect Cys48–Cys76 and Cys64–Cys90.

The protein belongs to the IL-4/IL-13 family. In terms of assembly, interacts with IL13RA2.

It localises to the secreted. Its function is as follows. Cytokine that plays important roles in allergic inflammation and immune response to parasite infection. Synergizes with IL2 in regulating interferon-gamma synthesis. Stimulates B-cell proliferation, and activation of eosinophils, basophils, and mast cells. Plays an important role in controlling IL33 activity by modulating the production of transmembrane and soluble forms of interleukin-1 receptor-like 1/IL1RL1. Displays the capacity to antagonize Th1-driven proinflammatory immune response and downregulates synthesis of many proinflammatory cytokines including IL1, IL6, IL10, IL12 and TNF-alpha through a mechanism that partially involves suppression of NF-kappa-B. Also functions on nonhematopoietic cells, including endothelial cells where it induces vascular cell adhesion protein 1/VCAM1, which is important in the recruitment of eosinophils. Exerts its biological effects through its receptors which comprises the IL4R chain and the IL13RA1 chain, to activate JAK1 and TYK2, leading to the activation of STAT6. Aside from IL13RA1, another receptor IL13RA2 acts as a high affinity decoy for IL13 and mediates internalization and depletion of extracellular IL13. The protein is Interleukin-13 (IL13) of Camelus bactrianus (Bactrian camel).